The sequence spans 200 residues: MDKTQPHPLFKLATELGPLIVFFFVNAKFNLFAATGAFMVAIIAALIASYVVTRHIPLMALVTAVVVIVFGTLTLVLHDETFIKVKPTIIYGLFAAVLGGGLVFNRSFIAIMFDQMFNLTPAGWRILTFRWALFFAGMAVLNEIIWRTQSTDFWVGFKAFGVLPLTMIFAIAQMPLIKRYHQDPASLEASDAAEGDVSKG.

Transmembrane regions (helical) follow at residues 7 to 27 (HPLFKLATELGPLIVFFFVNA), 32 to 52 (FAATGAFMVAIIAALIASYVV), 56 to 76 (IPLMALVTAVVVIVFGTLTLV), 93 to 113 (LFAAVLGGGLVFNRSFIAIMF), 126 to 146 (ILTFRWALFFAGMAVLNEIIW), and 153 to 173 (FWVGFKAFGVLPLTMIFAIAQ).

Belongs to the YciB family.

Its subcellular location is the cell inner membrane. Plays a role in cell envelope biogenesis, maintenance of cell envelope integrity and membrane homeostasis. In Bradyrhizobium sp. (strain ORS 278), this protein is Inner membrane-spanning protein YciB.